We begin with the raw amino-acid sequence, 396 residues long: MTTYTVSRKVAWLRVVTLAVAAFIFNTTEFVPVGLLSDIAQSFHMQTAQVGIMLTIYAWVVALMSLPFMLMTSQVERRKLLICLFVVFIASHVLSFLSWSFTVLVISRIGVAFAHAIFWSITASLAIRMAPAGKRAQALSLIATGTALAMVLGLPLGRIVGQYFGWRMTFFAIGIGALVTLLCLIKLLPLLPSEHSGSLKSLPLLFRRPALMSIYLLTVVVVTAHYTAYSYIEPFVQNIAGFSANFATALLLLLGGAGIIGSVIFGKLGNQYASALVSTAIALLLVCLALLLPAANSEIHLGVLSIFWGIAMMIIGLGMQVKVLALAPDATDVAMALFSGIFNIGIGAGALVGNQVSLHWSMSMIGYVGAVPAFAALIWSIIIFRRWPVTLEEQTQ.

12 helical membrane-spanning segments follow: residues 15–35 (VVTL…PVGL), 50–70 (VGIM…PFML), 81–101 (LICL…SWSF), 103–123 (VLVI…SITA), 136–156 (AQAL…GLPL), 170–190 (FFAI…LLPL), 209–229 (PALM…YTAY), 246–266 (FATA…VIFG), 275–295 (ALVS…LPAA), 299–319 (IHLG…GLGM), 333–353 (VAMA…ALVG), and 364–384 (MIGY…IIIF).

This sequence belongs to the major facilitator superfamily. SotB (TC 2.A.1.2) family.

It is found in the cell inner membrane. Functionally, involved in the efflux of sugars. The physiological role may be the reduction of the intracellular concentration of toxic sugars or sugar metabolites. In Shigella flexneri serotype 5b (strain 8401), this protein is Probable sugar efflux transporter.